The chain runs to 342 residues: Pyridoxal 4-dehydrogenase (342 aa).

Aspartate 56 is an active-site residue. Tyrosine 61 functions as the Proton donor in the catalytic mechanism. Lysine 86 is an active-site residue. 245 to 255 (GVFNSGILAAP) provides a ligand contact to NADP(+).

It belongs to the aldo/keto reductase family. As to quaternary structure, homodimer.

The enzyme catalyses pyridoxal + NAD(+) = 4-pyridoxolactone + NADH + H(+). It functions in the pathway cofactor degradation; B6 vitamer degradation; 4-pyridoxate from pyridoxal: step 1/2. The polypeptide is Pyridoxal 4-dehydrogenase (pld1) (Microbacterium luteolum (Aureobacterium luteolum)).